The following is a 205-amino-acid chain: Riboflavin kinase (205 aa).

The interval 1 to 24 is disordered; sequence MRPDTSRDPVAGPDSGPEPPFPIR. Residues Thr-44 and Asn-46 each contribute to the Mg(2+) site. Glu-104 serves as the catalytic Nucleophile.

This sequence belongs to the flavokinase family. Requires Zn(2+) as cofactor. It depends on Mg(2+) as a cofactor.

The enzyme catalyses riboflavin + ATP = FMN + ADP + H(+). The protein operates within cofactor biosynthesis; FMN biosynthesis; FMN from riboflavin (ATP route): step 1/1. Functionally, catalyzes the phosphorylation of riboflavin (vitamin B2) to form flavin mononucleotide (FMN) coenzyme. This is Riboflavin kinase (fmn1) from Aspergillus terreus (strain NIH 2624 / FGSC A1156).